A 335-amino-acid polypeptide reads, in one-letter code: MLP-like protein 28 (335 aa).

Belongs to the MLP family.

Its function is as follows. Can bind steroids (in vitro), and may also bind other types of hydrophobic ligands. This is MLP-like protein 28 (MLP28) from Arabidopsis thaliana (Mouse-ear cress).